The primary structure comprises 211 residues: Large ribosomal subunit protein uL4 (211 aa).

Over residues 41 to 53 the composition is skewed to polar residues; the sequence is QAHSRQGTASTLT. Residues 41 to 78 are disordered; it reads QAHSRQGTASTLTRAEVRGGGRKPYKQKGTGRARQGTI. The segment covering 60–71 has biased composition (basic residues); the sequence is GGRKPYKQKGTG.

This sequence belongs to the universal ribosomal protein uL4 family. As to quaternary structure, part of the 50S ribosomal subunit.

One of the primary rRNA binding proteins, this protein initially binds near the 5'-end of the 23S rRNA. It is important during the early stages of 50S assembly. It makes multiple contacts with different domains of the 23S rRNA in the assembled 50S subunit and ribosome. Its function is as follows. Forms part of the polypeptide exit tunnel. This Prochlorococcus marinus (strain MIT 9303) protein is Large ribosomal subunit protein uL4.